Here is a 240-residue protein sequence, read N- to C-terminus: 2,3,4,5-tetrahydropyridine-2,6-dicarboxylate N-acetyltransferase (240 aa).

This sequence belongs to the transferase hexapeptide repeat family. DapH subfamily.

The enzyme catalyses (S)-2,3,4,5-tetrahydrodipicolinate + acetyl-CoA + H2O = L-2-acetamido-6-oxoheptanedioate + CoA. It functions in the pathway amino-acid biosynthesis; L-lysine biosynthesis via DAP pathway; LL-2,6-diaminopimelate from (S)-tetrahydrodipicolinate (acetylase route): step 1/3. Catalyzes the transfer of an acetyl group from acetyl-CoA to tetrahydrodipicolinate. The chain is 2,3,4,5-tetrahydropyridine-2,6-dicarboxylate N-acetyltransferase from Shouchella clausii (strain KSM-K16) (Alkalihalobacillus clausii).